The sequence spans 236 residues: uncharacterized protein (236 aa).

The HTH gntR-type domain occupies 7-74 (RTNRRDIYLK…PKIGSFVSRV (68 aa)). Residues 34–53 (ENELAASMGVSRTPVRESLI) constitute a DNA-binding region (H-T-H motif).

This is an uncharacterized protein from Streptomyces ambofaciens.